We begin with the raw amino-acid sequence, 327 residues long: DNA-directed RNA polymerase subunit alpha (327 aa).

Residues 1-233 form an alpha N-terminal domain (alpha-NTD) region; it reads MVREKVKVST…NLFIPFLHVE (233 aa). Positions 266 to 327 are alpha C-terminal domain (alpha-CTD); it reads EQGFQYIFID…KKILDILEKK (62 aa).

The protein belongs to the RNA polymerase alpha chain family. In terms of assembly, in plastids the minimal PEP RNA polymerase catalytic core is composed of four subunits: alpha, beta, beta', and beta''. When a (nuclear-encoded) sigma factor is associated with the core the holoenzyme is formed, which can initiate transcription.

The protein localises to the plastid. It is found in the chloroplast. It catalyses the reaction RNA(n) + a ribonucleoside 5'-triphosphate = RNA(n+1) + diphosphate. Its function is as follows. DNA-dependent RNA polymerase catalyzes the transcription of DNA into RNA using the four ribonucleoside triphosphates as substrates. This Barbarea verna (Land cress) protein is DNA-directed RNA polymerase subunit alpha.